The sequence spans 300 residues: Acetylglutamate kinase (300 aa).

Substrate is bound by residues 73 to 74 (GG), Arg95, and Asn197.

This sequence belongs to the acetylglutamate kinase family. ArgB subfamily.

It localises to the cytoplasm. It carries out the reaction N-acetyl-L-glutamate + ATP = N-acetyl-L-glutamyl 5-phosphate + ADP. It participates in amino-acid biosynthesis; L-arginine biosynthesis; N(2)-acetyl-L-ornithine from L-glutamate: step 2/4. Its function is as follows. Catalyzes the ATP-dependent phosphorylation of N-acetyl-L-glutamate. The polypeptide is Acetylglutamate kinase (Bordetella petrii (strain ATCC BAA-461 / DSM 12804 / CCUG 43448)).